A 143-amino-acid chain; its full sequence is Gastrin-releasing peptide (143 aa).

Residues 1–23 form the signal peptide; that stretch reads MRGPELRLVLLALVLCQAPLGPA. Position 50 is a methionine amide (Met50). The propeptide occupies 54-143; it reads STGESRHVLE…GLKAKEGALS (90 aa). The interval 91 to 115 is disordered; it reads KGNSSHRSPQLKPLSTHQPTLDTED. A compositionally biased stretch (polar residues) spans 92–111; it reads GNSSHRSPQLKPLSTHQPTL.

The protein belongs to the bombesin/neuromedin-B/ranatensin family.

The protein localises to the secreted. It is found in the cytoplasmic vesicle. Its subcellular location is the secretory vesicle lumen. The protein resides in the cell projection. It localises to the neuron projection. Its function is as follows. Stimulates the release of gastrin and other gastrointestinal hormones. Contributes to the perception of prurient stimuli and to the transmission of itch signals in the spinal cord that promote scratching behavior. Contributes primarily to nonhistaminergic itch sensation. In one study, shown to act in the amygdala as part of an inhibitory network which inhibits memory specifically related to learned fear. In another study, shown to act on vasoactive intestinal peptide (VIP)-expressing cells in the auditory cortex, most likely via extrasynaptic diffusion from local and long-range sources, to mediate disinhibition of glutamatergic cells via VIP cell-specific GRPR signaling which leads to enhanced auditory fear memories. Contributes to the regulation of food intake. Inhibits voltage-gated sodium channels but enhances voltage-gated potassium channels in hippocampal neurons. Induces sighing by acting directly on the pre-Botzinger complex, a cluster of several thousand neurons in the ventrolateral medulla responsible for inspiration during respiratory activity. Induces an itch response through activation of receptors present on mast cells, triggering mast cell degranulation. The polypeptide is Gastrin-releasing peptide (GRP) (Cavia porcellus (Guinea pig)).